Here is a 99-residue protein sequence, read N- to C-terminus: Transposase InsE for insertion sequence IS3A (99 aa).

The segment at 1–21 (MTKTVSTSKKPRKQHSPEFRS) is disordered.

This sequence belongs to the transposase 8 family.

Involved in the transposition of the insertion sequence IS3. This is Transposase InsE for insertion sequence IS3A (insE1) from Escherichia coli (strain K12).